Consider the following 246-residue polypeptide: Metallo-beta-lactamase IMP-1 (246 aa).

Residues 1–18 (MSKLSVFFIFLFCSIATA) form the signal peptide. Zn(2+) contacts are provided by His95, His97, Asp99, His157, and Cys176. Lys179 and Asn185 together coordinate a beta-lactam. His215 is a binding site for Zn(2+).

It belongs to the metallo-beta-lactamase superfamily. Class-B beta-lactamase family. As to quaternary structure, monomer. Zn(2+) is required as a cofactor.

It is found in the periplasm. The catalysed reaction is a beta-lactam + H2O = a substituted beta-amino acid. Inhibited by captopril stereoisomers, Hg(2+), Fe(2+), Cu(2+), chelating agents such as EDTA, dansyl derivatives, including dansyl-C4SH, bisthiazolidines, mercaptoacetic acid and by PMPC phosphonates. Inhibited by 3-(3-mercaptopropionylsulfanyl)-propionic acid pentafluorophenyl ester, via a covalent binding to Lys-179. Not susceptible to inactivation by the beta-lactamase-blocking agents clavulanic acid or cloxacillin. In terms of biological role, class B beta-lactamase which confers resistance to the beta-lactam antibiotics, including penicillins, cephalosporins and carbapenems. Acts via hydrolysis of the beta-lactam ring. Has penicillin-, cephalosporin- and carbapenem-hydrolyzing activities. Has endoribonuclease activity, cleaving substrate RNAs preferentially between U/C and A, in vitro. The chain is Metallo-beta-lactamase IMP-1 from Serratia marcescens.